The primary structure comprises 162 residues: 18.5 kDa class IV heat shock protein (162 aa).

Residues threonine 53–asparagine 149 form the sHSP domain.

Belongs to the small heat shock protein (HSP20) family. May form oligomeric structures.

The protein localises to the cytoplasm. This Arabidopsis thaliana (Mouse-ear cress) protein is 18.5 kDa class IV heat shock protein (HSP18.5).